Here is a 258-residue protein sequence, read N- to C-terminus: Putative cysteine-rich repeat secretory protein 35 (258 aa).

The N-terminal stretch at 1 to 29 is a signal peptide; the sequence is MYSSYSLSKRLIYVPILAIQFLLVRSVSS. Gnk2-homologous domains follow at residues 36–138 and 146–255; these read YLNH…TIKP and FKNT…LYPF.

This sequence belongs to the cysteine-rich repeat secretory protein family.

It is found in the secreted. The chain is Putative cysteine-rich repeat secretory protein 35 (CRRSP35) from Arabidopsis thaliana (Mouse-ear cress).